The following is a 401-amino-acid chain: Enoyl-[acyl-carrier-protein] reductase [NADH] 1 (401 aa).

Residues 48 to 53 (GSSSGY), 74 to 75 (FE), 111 to 112 (DA), and 139 to 140 (LA) contribute to the NAD(+) site. Residue Tyr225 participates in substrate binding. The active-site Proton donor is the Tyr235. Residues Lys244 and 273–275 (VVT) contribute to the NAD(+) site.

The protein belongs to the TER reductase family. In terms of assembly, monomer.

It carries out the reaction a 2,3-saturated acyl-[ACP] + NAD(+) = a (2E)-enoyl-[ACP] + NADH + H(+). The catalysed reaction is a 2,3-saturated acyl-CoA + NAD(+) = a (2E)-enoyl-CoA + NADH + H(+). It catalyses the reaction (2E)-butenoyl-[ACP] + NADH + H(+) = butanoyl-[ACP] + NAD(+). The enzyme catalyses butanoyl-CoA + NAD(+) = (2E)-butenoyl-CoA + NADH + H(+). It participates in lipid metabolism; fatty acid biosynthesis. With respect to regulation, weakly inhibited by triclosan. Functionally, involved in the final reduction of the elongation cycle of fatty acid synthesis (FAS II). Catalyzes the NADH-dependent reduction of a carbon-carbon double bond in an enoyl moiety that is covalently linked to an acyl carrier protein (ACP). It can use both crotonyl-CoA and crotonyl-ACP. This chain is Enoyl-[acyl-carrier-protein] reductase [NADH] 1, found in Vibrio cholerae serotype O1 (strain ATCC 39315 / El Tor Inaba N16961).